The primary structure comprises 208 residues: Glutathione S-transferase P (208 aa).

The region spanning 1–78 (MTLKLTYFDI…HLARLNGLNG (78 aa)) is the GST N-terminal domain. Glutathione is bound by residues Tyr7, Trp38, Lys42, 49 to 50 (QV), and 62 to 63 (QS). The region spanning 80–202 (NETETTFIDM…NKRAAINPPV (123 aa)) is the GST C-terminal domain.

It belongs to the GST superfamily. Pi family. As to quaternary structure, homodimer. As to expression, expressed in dopaminergic (DA) neuron (at protein levels).

The catalysed reaction is RX + glutathione = an S-substituted glutathione + a halide anion + H(+). Its function is as follows. Conjugation of reduced glutathione to a wide number of exogenous and endogenous hydrophobic electrophiles. Prevents dopaminergic CEP neuron degeneration in response to Mn(2+). The chain is Glutathione S-transferase P (gst-1) from Caenorhabditis elegans.